The sequence spans 564 residues: Isocitrate dehydrogenase kinase/phosphatase (564 aa).

ATP contacts are provided by residues 315–321 and Lys336; that span reads APGVKGM. Asp371 is a catalytic residue.

The protein belongs to the AceK family.

It is found in the cytoplasm. It carries out the reaction L-seryl-[isocitrate dehydrogenase] + ATP = O-phospho-L-seryl-[isocitrate dehydrogenase] + ADP + H(+). Bifunctional enzyme which can phosphorylate or dephosphorylate isocitrate dehydrogenase (IDH) on a specific serine residue. This is a regulatory mechanism which enables bacteria to bypass the Krebs cycle via the glyoxylate shunt in response to the source of carbon. When bacteria are grown on glucose, IDH is fully active and unphosphorylated, but when grown on acetate or ethanol, the activity of IDH declines drastically concomitant with its phosphorylation. This is Isocitrate dehydrogenase kinase/phosphatase from Idiomarina loihiensis (strain ATCC BAA-735 / DSM 15497 / L2-TR).